A 252-amino-acid polypeptide reads, in one-letter code: Putative phosphonates utilization ATP-binding protein PhnK (252 aa).

Residues 6-246 (LSVNNLTHLY…PHHPYTQLLV (241 aa)) form the ABC transporter domain. 38–45 (GESGSGKT) contributes to the ATP binding site.

This sequence belongs to the ABC transporter superfamily. Forms a complex with PhnG, PhnH, PhnI and PhnJ with the suggested composition PhnG(4)H(2)I(2)J(2)K.

In terms of biological role, belongs to an operon involved in alkylphosphonate uptake and C-P lyase. Exact function not known. PhnK is not required for the ribophosphonate triphosphate (RPnTP) synthase reaction. This Escherichia coli (strain K12) protein is Putative phosphonates utilization ATP-binding protein PhnK (phnK).